Reading from the N-terminus, the 96-residue chain is NADH-ubiquinone oxidoreductase chain 4L (96 aa).

The next 3 helical transmembrane spans lie at 1-21 (MELM…ALSL), 27-47 (MLAL…LVMF), and 61-81 (IILL…VVAI).

Belongs to the complex I subunit 4L family.

The protein localises to the mitochondrion membrane. It catalyses the reaction a ubiquinone + NADH + 5 H(+)(in) = a ubiquinol + NAD(+) + 4 H(+)(out). In terms of biological role, core subunit of the mitochondrial membrane respiratory chain NADH dehydrogenase (Complex I) which catalyzes electron transfer from NADH through the respiratory chain, using ubiquinone as an electron acceptor. Part of the enzyme membrane arm which is embedded in the lipid bilayer and involved in proton translocation. This chain is NADH-ubiquinone oxidoreductase chain 4L (MT-ND4L), found in Lycodon semicarinatus (Ryukyu odd-tooth snake).